Consider the following 378-residue polypeptide: Erythronate-4-phosphate dehydrogenase (378 aa).

Residues Ser-45 and Thr-66 each contribute to the substrate site. 2 residues coordinate NAD(+): Asp-146 and Thr-175. Arg-208 is a catalytic residue. Asp-232 is a binding site for NAD(+). Residue Glu-237 is part of the active site. His-254 functions as the Proton donor in the catalytic mechanism. Gly-257 is an NAD(+) binding site. Tyr-258 is a binding site for substrate.

Belongs to the D-isomer specific 2-hydroxyacid dehydrogenase family. PdxB subfamily. Homodimer.

The protein resides in the cytoplasm. It catalyses the reaction 4-phospho-D-erythronate + NAD(+) = (R)-3-hydroxy-2-oxo-4-phosphooxybutanoate + NADH + H(+). It participates in cofactor biosynthesis; pyridoxine 5'-phosphate biosynthesis; pyridoxine 5'-phosphate from D-erythrose 4-phosphate: step 2/5. Its function is as follows. Catalyzes the oxidation of erythronate-4-phosphate to 3-hydroxy-2-oxo-4-phosphonooxybutanoate. The polypeptide is Erythronate-4-phosphate dehydrogenase (Enterobacter sp. (strain 638)).